A 183-amino-acid polypeptide reads, in one-letter code: Outer membrane protein H.8 (183 aa).

Positions methionine 1–alanine 17 are cleaved as a signal peptide. Cysteine 18 carries N-palmitoyl cysteine lipidation. A lipid anchor (S-diacylglycerol cysteine) is attached at cysteine 18. The segment at alanine 27–alanine 51 is disordered. In terms of domain architecture, Plastocyanin-like spans glycine 57 to aspartate 183. Histidine 102, cysteine 166, histidine 171, and methionine 175 together coordinate Cu cation.

Cu cation is required as a cofactor.

The protein resides in the cell outer membrane. The sequence is that of Outer membrane protein H.8 from Neisseria meningitidis serogroup C / serotype 2a (strain ATCC 700532 / DSM 15464 / FAM18).